A 735-amino-acid polypeptide reads, in one-letter code: Ion-translocating oxidoreductase complex subunit C (735 aa).

4Fe-4S ferredoxin-type domains follow at residues 368–397 (MGAP…QQLY) and 407–436 (KATA…VQYF). Positions 377, 380, 383, 387, 416, 419, 422, and 426 each coordinate [4Fe-4S] cluster. The interval 534-711 (QARAKQAAHP…EPVEPADPRK (178 aa)) is disordered.

It belongs to the 4Fe4S bacterial-type ferredoxin family. RnfC subfamily. The complex is composed of six subunits: RsxA, RsxB, RsxC, RsxD, RsxE and RsxG. Requires [4Fe-4S] cluster as cofactor.

Its subcellular location is the cell inner membrane. Its function is as follows. Part of a membrane-bound complex that couples electron transfer with translocation of ions across the membrane. Required to maintain the reduced state of SoxR. This is Ion-translocating oxidoreductase complex subunit C from Salmonella paratyphi A (strain ATCC 9150 / SARB42).